The primary structure comprises 364 residues: MTKKLYKIAVLPGDGIGPEIIQEAYKIIDVLQKKFSFNVKMHEYDIGGISIDKHGTALTQETIEGCENSDAILFGSVGGSKWDHLPEIEKPEKAGLLKLRKHFNLFANIRPCKLSQHLLDISPLKNSIIKKGIDLICIRELTGGIYFGKSNKITNIDDPYAFDTEIYFRSEIKRIAKIAFQIAQSRKKKIVSIDKANVLKSSILWRDTVNKMAYKFPNVKLEHMYIDNATMELIKNPSSFDVILCSNLFGDIISDECAAIIGSIGLLPSASLNKSGFGLYEPAGGSAPNIAGKTIANPIAQILSLSMLLKYSLHLPFLSSCIDEAVHEALVKKYMTMDISKNPQNFLKTNEIGDKISDLLAKKA.

NAD(+) is bound at residue glycine 79–glutamate 92. The substrate site is built by arginine 100, arginine 110, arginine 139, and aspartate 227. Aspartate 227, aspartate 251, and aspartate 255 together coordinate Mg(2+). Glycine 285 to asparagine 297 contacts NAD(+).

This sequence belongs to the isocitrate and isopropylmalate dehydrogenases family. LeuB type 1 subfamily. In terms of assembly, homodimer. Requires Mg(2+) as cofactor. Mn(2+) is required as a cofactor.

The protein localises to the cytoplasm. It catalyses the reaction (2R,3S)-3-isopropylmalate + NAD(+) = 4-methyl-2-oxopentanoate + CO2 + NADH. It functions in the pathway amino-acid biosynthesis; L-leucine biosynthesis; L-leucine from 3-methyl-2-oxobutanoate: step 3/4. Catalyzes the oxidation of 3-carboxy-2-hydroxy-4-methylpentanoate (3-isopropylmalate) to 3-carboxy-4-methyl-2-oxopentanoate. The product decarboxylates to 4-methyl-2 oxopentanoate. The polypeptide is 3-isopropylmalate dehydrogenase (Buchnera aphidicola subsp. Thelaxes suberi).